Reading from the N-terminus, the 282-residue chain is Undecaprenyl-diphosphatase (282 aa).

6 helical membrane passes run 90 to 110 (YWLGWYVIIGTIPICILGLVC), 121 to 141 (LWVVATALVAFSGVIAFAEYV), 165 to 185 (LALIPGVSRSGSTISAGLFLG), 194 to 214 (FGFLLAIPAVFASGLFSIPDA), 228 to 248 (QLLVATVIAFVVGLVAVSWLL), and 256 to 276 (LYWFVGYRIVVGVGVLILLAV).

This sequence belongs to the UppP family.

Its subcellular location is the cell membrane. The catalysed reaction is di-trans,octa-cis-undecaprenyl diphosphate + H2O = di-trans,octa-cis-undecaprenyl phosphate + phosphate + H(+). Catalyzes the dephosphorylation of undecaprenyl diphosphate (UPP). Confers resistance to bacitracin. This Mycobacterium leprae (strain Br4923) protein is Undecaprenyl-diphosphatase.